Here is a 323-residue protein sequence, read N- to C-terminus: ADP-L-glycero-D-manno-heptose-6-epimerase (323 aa).

NADP(+)-binding positions include 10-11, 31-32, Lys-38, Arg-53, 75-79, and Asn-92; these read FI, DN, and MGACS. Catalysis depends on Tyr-143, which acts as the Proton acceptor. Lys-147 serves as a coordination point for NADP(+). Asn-170 serves as a coordination point for substrate. NADP(+) is bound by residues Val-171 and Lys-179. Residue Lys-179 is the Proton acceptor of the active site. Residues Asp-181, Lys-188, 202 to 205, Arg-216, and Tyr-281 each bind substrate; that span reads FRSC.

This sequence belongs to the NAD(P)-dependent epimerase/dehydratase family. HldD subfamily. As to quaternary structure, homopentamer. Requires NADP(+) as cofactor.

It carries out the reaction ADP-D-glycero-beta-D-manno-heptose = ADP-L-glycero-beta-D-manno-heptose. Its pathway is nucleotide-sugar biosynthesis; ADP-L-glycero-beta-D-manno-heptose biosynthesis; ADP-L-glycero-beta-D-manno-heptose from D-glycero-beta-D-manno-heptose 7-phosphate: step 4/4. In terms of biological role, catalyzes the interconversion between ADP-D-glycero-beta-D-manno-heptose and ADP-L-glycero-beta-D-manno-heptose via an epimerization at carbon 6 of the heptose. The polypeptide is ADP-L-glycero-D-manno-heptose-6-epimerase (Nitratidesulfovibrio vulgaris (strain DP4) (Desulfovibrio vulgaris)).